The following is a 92-amino-acid chain: uncharacterized protein (92 aa).

This is an uncharacterized protein from Escherichia coli (strain K12).